Reading from the N-terminus, the 52-residue chain is Transmembrane protein ORF52 (52 aa).

Transmembrane regions (helical) follow at residues 11–31 and 32–52; these read AFLG…EIIT and FMAL…GLFV.

Its subcellular location is the host membrane. This Acidianus filamentous virus 1 (isolate United States/Yellowstone) (AFV-1) protein is Transmembrane protein ORF52.